The chain runs to 181 residues: MNRLKQLYENSIKPAIVKEFDIKNSMLIPKLDKIVISVGVGESSKDEKILQNMADTISLIAGQKAVITNAKKSIAGFKVREGFPVGIKVTLRKDNMFVFLDKLVSIALPRVKDFRGLSRDGFDGRGNYNFGLDEQLMFPEVEYDKILKTHGMNITIVTTANSDKEAFKLLELFGVPFAKGK.

The protein belongs to the universal ribosomal protein uL5 family. In terms of assembly, part of the 50S ribosomal subunit; part of the 5S rRNA/L5/L18/L25 subcomplex. Contacts the 5S rRNA and the P site tRNA. Forms a bridge to the 30S subunit in the 70S ribosome.

In terms of biological role, this is one of the proteins that bind and probably mediate the attachment of the 5S RNA into the large ribosomal subunit, where it forms part of the central protuberance. In the 70S ribosome it contacts protein S13 of the 30S subunit (bridge B1b), connecting the 2 subunits; this bridge is implicated in subunit movement. Contacts the P site tRNA; the 5S rRNA and some of its associated proteins might help stabilize positioning of ribosome-bound tRNAs. In Campylobacter hominis (strain ATCC BAA-381 / DSM 21671 / CCUG 45161 / LMG 19568 / NCTC 13146 / CH001A), this protein is Large ribosomal subunit protein uL5.